The primary structure comprises 238 residues: Ribonuclease PH (238 aa).

Residues Arg86 and Gly124 to Arg126 each bind phosphate.

This sequence belongs to the RNase PH family. As to quaternary structure, homohexameric ring arranged as a trimer of dimers.

It catalyses the reaction tRNA(n+1) + phosphate = tRNA(n) + a ribonucleoside 5'-diphosphate. Functionally, phosphorolytic 3'-5' exoribonuclease that plays an important role in tRNA 3'-end maturation. Removes nucleotide residues following the 3'-CCA terminus of tRNAs; can also add nucleotides to the ends of RNA molecules by using nucleoside diphosphates as substrates, but this may not be physiologically important. Probably plays a role in initiation of 16S rRNA degradation (leading to ribosome degradation) during starvation. This Yersinia pseudotuberculosis serotype O:1b (strain IP 31758) protein is Ribonuclease PH.